The chain runs to 93 residues: U12-lycotoxin-Ls1a (93 aa).

The first 18 residues, 1–18, serve as a signal peptide directing secretion; sequence MKFAVILLFSLVVLTVAS. A propeptide spanning residues 19–38 is cleaved from the precursor; it reads ESVEEVRREIDIEDLPEQQR.

Belongs to the neurotoxin 31 family. In terms of processing, contains 5 disulfide bonds. As to expression, expressed by the venom gland.

Its subcellular location is the secreted. This chain is U12-lycotoxin-Ls1a, found in Lycosa singoriensis (Wolf spider).